The following is a 350-amino-acid chain: UDP-glucose 4-epimerase 2 (350 aa).

Residues Gly-12 to Ile-14, Asp-33 to Asn-37, Asp-63 to Leu-64, Phe-85, and Lys-89 contribute to the NAD(+) site. Position 129–131 (Ser-129–Thr-131) interacts with substrate. The Proton acceptor role is filled by Tyr-153. Residues Lys-157 and Tyr-181 each coordinate NAD(+). Substrate is bound by residues Tyr-181 to Asn-183, Asn-202 to Leu-204, Thr-220 to Phe-222, Arg-235, and Arg-297 to Asp-300.

The protein belongs to the NAD(P)-dependent epimerase/dehydratase family. Forms homodimers and heterodimers. NAD(+) serves as cofactor. As to expression, widely expressed. Most highly expressed in stems and flowers.

The protein resides in the cytoplasm. It carries out the reaction UDP-alpha-D-glucose = UDP-alpha-D-galactose. It participates in carbohydrate metabolism; galactose metabolism. Enhanced activity by NaCl. Enhanced activity by NAD(+). Strongly inhibited by UDP. Catalyzes the interconversion between UDP-glucose and UDP-galactose. Cooperates with UGE3 in pollen development and with UGE4 in cell wall carbohydrate biosynthesis and growth. The protein is UDP-glucose 4-epimerase 2 of Arabidopsis thaliana (Mouse-ear cress).